Here is a 260-residue protein sequence, read N- to C-terminus: tRNA (guanine-N(1)-)-methyltransferase (260 aa).

S-adenosyl-L-methionine contacts are provided by residues Gly-117 and 137-142; that span reads LGDFVL.

This sequence belongs to the RNA methyltransferase TrmD family. In terms of assembly, homodimer.

The protein resides in the cytoplasm. It carries out the reaction guanosine(37) in tRNA + S-adenosyl-L-methionine = N(1)-methylguanosine(37) in tRNA + S-adenosyl-L-homocysteine + H(+). Functionally, specifically methylates guanosine-37 in various tRNAs. The chain is tRNA (guanine-N(1)-)-methyltransferase from Cupriavidus metallidurans (strain ATCC 43123 / DSM 2839 / NBRC 102507 / CH34) (Ralstonia metallidurans).